Reading from the N-terminus, the 110-residue chain is Thiosulfate sulfurtransferase GlpE (110 aa).

Positions 17–105 (KKEGAVVVDI…WRATYPAETA (89 aa)) constitute a Rhodanese domain. C65 serves as the catalytic Cysteine persulfide intermediate.

Belongs to the GlpE family.

The protein resides in the cytoplasm. The enzyme catalyses thiosulfate + hydrogen cyanide = thiocyanate + sulfite + 2 H(+). It catalyses the reaction thiosulfate + [thioredoxin]-dithiol = [thioredoxin]-disulfide + hydrogen sulfide + sulfite + 2 H(+). In terms of biological role, transferase that catalyzes the transfer of sulfur from thiosulfate to thiophilic acceptors such as cyanide or dithiols. May function in a CysM-independent thiosulfate assimilation pathway by catalyzing the conversion of thiosulfate to sulfite, which can then be used for L-cysteine biosynthesis. The sequence is that of Thiosulfate sulfurtransferase GlpE from Pseudomonas putida (strain ATCC 700007 / DSM 6899 / JCM 31910 / BCRC 17059 / LMG 24140 / F1).